We begin with the raw amino-acid sequence, 105 residues long: Met repressor (105 aa).

This sequence belongs to the MetJ family. In terms of assembly, homodimer.

The protein resides in the cytoplasm. This regulatory protein, when combined with SAM (S-adenosylmethionine) represses the expression of the methionine regulon and of enzymes involved in SAM synthesis. This chain is Met repressor, found in Vibrio cholerae serotype O1 (strain ATCC 39541 / Classical Ogawa 395 / O395).